Here is a 325-residue protein sequence, read N- to C-terminus: Beta-ketoacyl-[acyl-carrier-protein] synthase III (325 aa).

Residues cysteine 112 and histidine 250 contribute to the active site. The ACP-binding stretch occupies residues 251-255; that stretch reads QANSR. Asparagine 280 is a catalytic residue.

It belongs to the thiolase-like superfamily. FabH family. As to quaternary structure, homodimer.

Its subcellular location is the cytoplasm. The enzyme catalyses malonyl-[ACP] + acetyl-CoA + H(+) = 3-oxobutanoyl-[ACP] + CO2 + CoA. It functions in the pathway lipid metabolism; fatty acid biosynthesis. Its function is as follows. Catalyzes the condensation reaction of fatty acid synthesis by the addition to an acyl acceptor of two carbons from malonyl-ACP. Catalyzes the first condensation reaction which initiates fatty acid synthesis and may therefore play a role in governing the total rate of fatty acid production. Possesses both acetoacetyl-ACP synthase and acetyl transacylase activities. Its substrate specificity determines the biosynthesis of branched-chain and/or straight-chain of fatty acids. The polypeptide is Beta-ketoacyl-[acyl-carrier-protein] synthase III (Lactococcus lactis subsp. lactis (strain IL1403) (Streptococcus lactis)).